Here is a 234-residue protein sequence, read N- to C-terminus: 7-cyano-7-deazaguanine synthase (234 aa).

ATP is bound at residue 8-18 (FSGGQDSTTCA). Positions 194, 202, 205, and 208 each coordinate Zn(2+).

Belongs to the QueC family. Zn(2+) is required as a cofactor.

It carries out the reaction 7-carboxy-7-deazaguanine + NH4(+) + ATP = 7-cyano-7-deazaguanine + ADP + phosphate + H2O + H(+). It participates in purine metabolism; 7-cyano-7-deazaguanine biosynthesis. Catalyzes the ATP-dependent conversion of 7-carboxy-7-deazaguanine (CDG) to 7-cyano-7-deazaguanine (preQ(0)). The polypeptide is 7-cyano-7-deazaguanine synthase (Gloeobacter violaceus (strain ATCC 29082 / PCC 7421)).